The chain runs to 3133 residues: Cysteine repeat modular protein A (3133 aa).

The interval 1–39 (MDSASTSMSRVHPSGVYRRPLLPSGGPRSTSERDERVDL) is disordered. Positions 30–39 (TSERDERVDL) are enriched in basic and acidic residues. The helical transmembrane segment at 123-143 (LFLLFSSSPLLLLLLLHQFFI) threads the bilayer. 2 stretches are compositionally biased toward basic and acidic residues: residues 173-211 (TFEEREADSHRGSRDGEKVSGSRDIRFEEQEIRSRDGKE) and 301-311 (NESEKAERARL). Disordered stretches follow at residues 173–234 (TFEE…EGRR) and 294–317 (VSPSHSGNESEKAERARLEQSTPA). N-linked (GlcNAc...) asparagine glycosylation is found at Asn301, Asn392, and Asn470. Residues 577-644 (DETLEQGKLY…DPHVRFDFCD (68 aa)) enclose the Kringle domain. 2 cysteine pairs are disulfide-bonded: Cys599/Cys631 and Cys620/Cys643. Residues Asn1364 and Asn1532 are each glycosylated (N-linked (GlcNAc...) asparagine). Helical transmembrane passes span 2229-2249 (MVWNIVCLMGYYLATLLFNIV), 2276-2296 (LTGISVLSVIDFSTIAFPSWI), and 2339-2359 (VFYALIPIALPIVATIIMSII). An N-linked (GlcNAc...) asparagine glycan is attached at Asn2369. A run of 3 helical transmembrane segments spans residues 2420–2440 (AAKFMEDMIPIYVTVLFFVYS), 2489–2509 (VGITGLLVWSIGIPLSCFLVL), and 2539–2559 (WEMVVFARKFLVIVVSSVALI). Asn2565 carries N-linked (GlcNAc...) asparagine glycosylation. The helical transmembrane segment at 2569-2589 (VWLAVVIAVIFLIIHLVTQPF) threads the bilayer. Asn2602 is a glycosylation site (N-linked (GlcNAc...) asparagine). The next 2 helical transmembrane spans lie at 2607–2627 (IWTITLIVLAMMIGSDFSGSV) and 2632–2652 (LLFVAVLSCMFILEVGVSLMF). Composition is skewed to basic and acidic residues over residues 2827 to 2838 (FAAKDETPTAEE) and 3049 to 3069 (QEENARRKLEKEEREEADREI). Disordered stretches follow at residues 2827-2847 (FAAKDETPTAEEKTEEQDERL) and 3049-3101 (QEEN…LPEG). A coiled-coil region spans residues 2955–3068 (SEALQKRNRK…KEEREEADRE (114 aa)). Residues 3083–3094 (GEDDTATIDDSS) are compositionally biased toward acidic residues.

In terms of assembly, component of a complex, at least composed of cysteine repeat modular protein A (CRMPa), cysteine repeat modular protein B (CRMPb), micronemal protein 15 (MIC15) and thrombospondin type 1 domain-containing protein (TSP1).

The protein resides in the cell membrane. It localises to the endoplasmic reticulum. The protein localises to the golgi apparatus. Required for triggering rhoptry secretion. Plays a role in host cell invasion. This chain is Cysteine repeat modular protein A, found in Toxoplasma gondii.